Here is an 88-residue protein sequence, read N- to C-terminus: Large ribosomal subunit protein bL27 (88 aa).

A disordered region spans residues 1–23 (MAHKKAGGSSRNGRDSAGRRLGV).

This sequence belongs to the bacterial ribosomal protein bL27 family.

The polypeptide is Large ribosomal subunit protein bL27 (Methylorubrum populi (strain ATCC BAA-705 / NCIMB 13946 / BJ001) (Methylobacterium populi)).